We begin with the raw amino-acid sequence, 275 residues long: Expansin-B6 (275 aa).

An N-terminal signal peptide occupies residues 1–25 (MAARMGSKVAAILAILSVLVVHGSC). N-linked (GlcNAc...) asparagine glycosylation occurs at Asn33. Residues 64–170 (GGACGFKNVN…RRVPCNYPGL (107 aa)) form the Expansin-like EG45 domain. 3 cysteine pairs are disulfide-bonded: Cys67/Cys95, Cys98/Cys165, and Cys103/Cys109. Residues 183-270 (VYFAVLVEYE…NWSPNSNYRS (88 aa)) form the Expansin-like CBD domain.

Belongs to the expansin family. Expansin B subfamily. In terms of tissue distribution, expressed in internodes.

It localises to the secreted. Its subcellular location is the cell wall. The protein resides in the membrane. Functionally, may cause loosening and extension of plant cell walls by disrupting non-covalent bonding between cellulose microfibrils and matrix glucans. No enzymatic activity has been found. May be required for rapid internodal elongation in deepwater rice during submergence. The sequence is that of Expansin-B6 (EXPB6) from Oryza sativa subsp. japonica (Rice).